Here is a 175-residue protein sequence, read N- to C-terminus: Peptide deformylase (175 aa).

Residues Cys-96 and His-138 each coordinate Fe cation. The active site involves Glu-139. Residue His-142 coordinates Fe cation.

It belongs to the polypeptide deformylase family. It depends on Fe(2+) as a cofactor.

It catalyses the reaction N-terminal N-formyl-L-methionyl-[peptide] + H2O = N-terminal L-methionyl-[peptide] + formate. Functionally, removes the formyl group from the N-terminal Met of newly synthesized proteins. Requires at least a dipeptide for an efficient rate of reaction. N-terminal L-methionine is a prerequisite for activity but the enzyme has broad specificity at other positions. The chain is Peptide deformylase from Helicobacter pylori (strain Shi470).